The following is a 1267-amino-acid chain: Clustered mitochondria protein homolog (1267 aa).

7 TPR repeats span residues 64-102 (YNLKNSTGDLLLSSEEKTLRELCSDKDEYKVALELKPYN), 420-453 (YSFVGDLNQTYADKGGDEAAIASANQDLRTLNML), 716-749 (EAHEAKLAQVIVDNKEYEEWEKSYLQKIETMIKE), 795-830 (LVPLIKTAELEIISRSLKHILRKYSRSLPPIVIPAL), 904-939 (RSICNKFGVQLLNKDYFFSTEQLEEYKQSLDKKSRA), 1010-1043 (AEKYLTLSTIYNKLGLNAEAIAFCRKSCAIYERV), and 1138-1171 (AYIKSKLGNLLAADNRFSDALNQIKVAERIFTKE). The Clu domain maps to 329–586 (PTNGPDYLRT…NTYPLDVEFA (258 aa)). Polar residues predominate over residues 1203–1219 (QQDQTAASGLKQQPQKS). The segment at 1203-1267 (QQDQTAASGL…KSKSKGKNKK (65 aa)) is disordered. The span at 1224 to 1239 (NKKETTNPDLADKSVD) shows a compositional bias: basic and acidic residues. Over residues 1254-1267 (KTTKKSKSKGKNKK) the composition is skewed to basic residues.

It belongs to the CLU family. As to quaternary structure, may associate with the eukaryotic translation initiation factor 3 (eIF-3) complex.

It is found in the cytoplasm. Its function is as follows. mRNA-binding protein involved in proper cytoplasmic distribution of mitochondria. The protein is Clustered mitochondria protein homolog of Candida glabrata (strain ATCC 2001 / BCRC 20586 / JCM 3761 / NBRC 0622 / NRRL Y-65 / CBS 138) (Yeast).